Reading from the N-terminus, the 139-residue chain is Type II methyltransferase M.AquIB (139 aa).

The region spanning 1–135 is the SAM-dependent MTase C5-type domain; the sequence is MDIKNVHIKN…KAVSEQLLDV (135 aa). Positions 38 to 58 are disordered; the sequence is KTFGSTYRRLDPNQPSPTVTR.

The protein belongs to the class I-like SAM-binding methyltransferase superfamily. C5-methyltransferase family. As to quaternary structure, heterodimer of an alpha and a beta subunit.

The catalysed reaction is a 2'-deoxycytidine in DNA + S-adenosyl-L-methionine = a 5-methyl-2'-deoxycytidine in DNA + S-adenosyl-L-homocysteine + H(+). Its function is as follows. A methylase, recognizes the double-stranded sequence 5'-CYCGRG-3', methylates C-1 on both strands, and protects the DNA from cleavage by the AquI endonuclease. The sequence is that of Type II methyltransferase M.AquIB (aquIMB) from Picosynechococcus sp. (strain ATCC 27264 / PCC 7002 / PR-6) (Agmenellum quadruplicatum).